Reading from the N-terminus, the 276-residue chain is Diaminopimelate epimerase (276 aa).

The substrate site is built by N13, Q46, and N66. C75 acts as the Proton donor in catalysis. Residues 76 to 77 (GN), N159, N192, and 210 to 211 (ER) contribute to the substrate site. The active-site Proton acceptor is C219. 220-221 (GS) is a substrate binding site.

It belongs to the diaminopimelate epimerase family. Homodimer.

It localises to the cytoplasm. The enzyme catalyses (2S,6S)-2,6-diaminopimelate = meso-2,6-diaminopimelate. It participates in amino-acid biosynthesis; L-lysine biosynthesis via DAP pathway; DL-2,6-diaminopimelate from LL-2,6-diaminopimelate: step 1/1. In terms of biological role, catalyzes the stereoinversion of LL-2,6-diaminopimelate (L,L-DAP) to meso-diaminopimelate (meso-DAP), a precursor of L-lysine and an essential component of the bacterial peptidoglycan. The polypeptide is Diaminopimelate epimerase (Pseudoalteromonas atlantica (strain T6c / ATCC BAA-1087)).